Consider the following 212-residue polypeptide: Proheparin-binding EGF-like growth factor (212 aa).

The N-terminal stretch at 1–18 (MDGRVVLIHALLTAVCSA) is a signal peptide. The Extracellular portion of the chain corresponds to 19–167 (AVGKFGRDGP…PSTYDHTTAL (149 aa)). Positions 82–108 (SKPQGPVTPKKKGNGNKRRKGKGLGKK) are disordered. A compositionally biased stretch (basic residues) spans 90–106 (PKKKGNGNKRRKGKGLG). Residues 108 to 148 (KRDPCLRKYKDFCIHGECKYIRELGAPSCICQPGYHGERCH) form the EGF-like domain. Disulfide bonds link cysteine 112–cysteine 125, cysteine 120–cysteine 136, and cysteine 138–cysteine 147. A propeptide spans 153 to 212 (PVEHPPSTYDHTTALAVVAVVLSSLCLVIITALLMFRCHKRGVYDVENEEKIKLGITVNH) (C-terminal). The helical transmembrane segment at 168-188 (AVVAVVLSSLCLVIITALLMF) threads the bilayer. The Cytoplasmic segment spans residues 189–212 (RCHKRGVYDVENEEKIKLGITVNH).

As to quaternary structure, interacts with CNIH2.

The protein resides in the secreted. It is found in the extracellular space. The protein localises to the cell membrane. Functionally, may be involved in macrophage-mediated cellular proliferation. It is mitogenic for fibroblasts and smooth muscle but not endothelial cells. It is able to bind EGF receptor/EGFR with higher affinity than EGF itself and is a far more potent mitogen for smooth muscle cells than EGF. Plays an important role in the proper development of cranial nerves by inhibiting the migration of the cranial neural crest cells (NCCs) into the odd-numbered neuromeres (r3 and r5) of the hindbrain Plays a role in mediating v-Jun-induced oncogenic transformation. This chain is Proheparin-binding EGF-like growth factor (HBEGF), found in Gallus gallus (Chicken).